A 104-amino-acid chain; its full sequence is MAVKRSSKLTQTAMLKQILKRCSSLAKNQCYDEDGLPVDVPKGHFPVYVGEKRSRYIVPISFLTHPKFKSLLQQAEEEFGFNHDMGLTIPCEEVVFRSLTSMIG.

This sequence belongs to the ARG7 family. In terms of tissue distribution, expressed in flowers and etiolated hypocotyls.

The protein resides in the cell membrane. Its function is as follows. Provide a mechanistic link between auxin and plasma membrane H(+)-ATPases (PM H(+)-ATPases, e.g. AHA1 and AHA2), and triggers PM H(+)-ATPases activity by promoting phosphorylation of their C-terminal autoinhibitory domain as a result of PP2C-D subfamily of type 2C phosphatases inhibition, thus leading to the acidification of the apoplast and the facilitation of solutes and water uptake to drive cell expansion. Triggers plant growth probably by promoting cell elongation. Regulates branch angles and bending. This chain is Protein SMALL AUXIN UP-REGULATED RNA 12, found in Arabidopsis thaliana (Mouse-ear cress).